The sequence spans 464 residues: Centrosomal protein of 55 kDa (464 aa).

A compositionally biased stretch (basic and acidic residues) spans 1 to 11 (MSSRSTKDLIK). Residues 1–26 (MSSRSTKDLIKSKWGSKPSNSKSETT) form a disordered region. 3 coiled-coil regions span residues 22–186 (KSET…QWLV), 238–337 (NDLL…FLYT), and 374–403 (QHQL…LHEF). Ser-96 carries the phosphoserine modification. Positions 157–236 (PNCFNSSINN…GYLQEEKQKC (80 aa)) are interaction with TSG101. Residues 160-214 (FNSSINNIHEMEIQLKDALEKNQQWLVYDQQREVYVKGLLAKIFELEKKTETAAH) form an interaction with PDCD6IP region. Residues 355–464 (QMQACTLDFE…LLVHVEYCSK (110 aa)) form a required for localization to the interphase centrosome and to the midbody during cytokinesis region. A phosphoserine; by CDK1 and MAPK1 mark is found at Ser-425 and Ser-428. Thr-430 bears the Phosphothreonine mark. Phosphoserine; by PLK1 is present on Ser-436.

In terms of assembly, homodimer. Interacts (phosphorylated on Ser-425 and Ser-428) with PLK1; the interaction is indirect via the MTMR3:MTMR4 heterooligomer, occurs during early mitosis, regulates the phosphorylation of CEP55 by PLK1 and its recruitment to the midbody where it can mediate cell abscission. Interacts with AKAP9/CG-NAP; the interaction occurs in interphase and is lost upon mitotic entry. Interacts with PCNT/Kendrin; the interaction occurs in interphase and is lost upon mitotic entry. Directly interacts with PDCD6IP; this interaction is required for PDCD6IP targeting to the midbody; CEP55 binds PDCD6IP in a 2:1 stoichiometry; PDCD6IP competes with TSG101 for the same binding site. Interacts with TSG101; TSG101 competes with PDCD6IP for the same binding site; interaction is required for cytokinesis but not for viral budding. Interacts with MVB12A, VPS37B, VPS37C and VPS28. Post-translationally, there is a hierachy of phosphorylation, where both Ser-425 and Ser-428 are phosphorylated at the onset of mitosis, prior to Ser-436. Phosphorylation at Ser-425 and Ser-428 is required for dissociation from the centrosome at the G2/M boundary. Phosphorylation at the 3 sites, Ser-425, Ser-428 and Ser-436, is required for protein function at the final stages of cell division to complete cytokinesis successfully. Expressed in embryonic brain. Expressed in fetal brain ganglionic eminence, kidney tubules and multinucleate neurons in the temporal cortex. Expressed in adult brain, cerebellum, kidney tubules, intestine and muscles (at protein level). Widely expressed, mostly in proliferative tissues. Highly expressed in testis. Intermediate levels in adult and fetal thymus, as well as in various cancer cell lines. Low levels in different parts of the digestive tract, bone marrow, lymph nodes, placenta, fetal heart and fetal spleen. Hardly detected in brain.

The protein localises to the cytoplasm. The protein resides in the cytoskeleton. It localises to the microtubule organizing center. It is found in the centrosome. Its subcellular location is the centriole. The protein localises to the cleavage furrow. The protein resides in the midbody. It localises to the midbody ring. Plays a role in mitotic exit and cytokinesis. Recruits PDCD6IP and TSG101 to midbody during cytokinesis. Required for successful completion of cytokinesis. Not required for microtubule nucleation. Plays a role in the development of the brain and kidney. The sequence is that of Centrosomal protein of 55 kDa from Homo sapiens (Human).